A 78-amino-acid polypeptide reads, in one-letter code: Large ribosomal subunit protein bL28 (78 aa).

This sequence belongs to the bacterial ribosomal protein bL28 family.

The polypeptide is Large ribosomal subunit protein bL28 (Francisella tularensis subsp. holarctica (strain FTNF002-00 / FTA)).